The sequence spans 488 residues: Gamma-aminobutyric acid receptor subunit beta-4 (488 aa).

An N-terminal signal peptide occupies residues 1 to 25 (MWTFQADRLSGIVSALAALCVACCA). Topologically, residues 26–244 (QSPSTGNISV…SFRIKRNIGY (219 aa)) are extracellular. 4 N-linked (GlcNAc...) asparagine glycosylation sites follow: Asn-32, Asn-104, Asn-173, and Asn-195. A disulfide bridge connects residues Cys-160 and Cys-174. Helical transmembrane passes span 245-266 (FILQ…SFWI), 271-292 (SAAR…NTHL), and 304-326 (AIDV…YAFV). Topologically, residues 327 to 465 (NYIFFGRGPR…DLTDVSTIDK (139 aa)) are cytoplasmic. The helical transmembrane segment at 466 to 487 (WSRIIFPITFGFFNLVYWLYYV) threads the bilayer.

This sequence belongs to the ligand-gated ion channel (TC 1.A.9) family. Gamma-aminobutyric acid receptor (TC 1.A.9.5) subfamily. GABRB4 sub-subfamily. In terms of assembly, generally pentameric. There are five types of GABA(A) receptor chains: alpha, beta, gamma, delta, and rho.

It is found in the postsynaptic cell membrane. Its subcellular location is the cell membrane. In terms of biological role, GABA, the major inhibitory neurotransmitter in the vertebrate brain, mediates neuronal inhibition by binding to the GABA/benzodiazepine receptor and opening an integral chloride channel. The chain is Gamma-aminobutyric acid receptor subunit beta-4 (GABRB4) from Gallus gallus (Chicken).